The chain runs to 431 residues: Enolase (431 aa).

(2R)-2-phosphoglycerate is bound at residue Gln-166. Glu-208 serves as the catalytic Proton donor. Mg(2+)-binding residues include Asp-245, Glu-288, and Asp-315. 4 residues coordinate (2R)-2-phosphoglycerate: Lys-340, Arg-369, Ser-370, and Lys-391. The active-site Proton acceptor is the Lys-340.

It belongs to the enolase family. The cofactor is Mg(2+).

It localises to the cytoplasm. It is found in the secreted. Its subcellular location is the cell surface. It carries out the reaction (2R)-2-phosphoglycerate = phosphoenolpyruvate + H2O. It participates in carbohydrate degradation; glycolysis; pyruvate from D-glyceraldehyde 3-phosphate: step 4/5. Its function is as follows. Catalyzes the reversible conversion of 2-phosphoglycerate (2-PG) into phosphoenolpyruvate (PEP). It is essential for the degradation of carbohydrates via glycolysis. The polypeptide is Enolase (Clostridium botulinum (strain Okra / Type B1)).